The following is a 61-amino-acid chain: Probable tautomerase lin2709 (61 aa).

The active-site Proton acceptor; via imino nitrogen is Pro-2.

It belongs to the 4-oxalocrotonate tautomerase family.

The chain is Probable tautomerase lin2709 from Listeria innocua serovar 6a (strain ATCC BAA-680 / CLIP 11262).